A 393-amino-acid chain; its full sequence is Dual-specificity RNA methyltransferase RlmN (393 aa).

Glu-114 (proton acceptor) is an active-site residue. One can recognise a Radical SAM core domain in the interval 120 to 359; that stretch reads EDDRATLCVS…VIVRKTRGDD (240 aa). Cysteines 127 and 364 form a disulfide. The [4Fe-4S] cluster site is built by Cys-134, Cys-138, and Cys-141. Residues 188-189, Ser-220, 242-244, and Asn-321 each bind S-adenosyl-L-methionine; these read GE and SLH. Cys-364 serves as the catalytic S-methylcysteine intermediate.

Belongs to the radical SAM superfamily. RlmN family. [4Fe-4S] cluster serves as cofactor.

It localises to the cytoplasm. The catalysed reaction is adenosine(2503) in 23S rRNA + 2 reduced [2Fe-2S]-[ferredoxin] + 2 S-adenosyl-L-methionine = 2-methyladenosine(2503) in 23S rRNA + 5'-deoxyadenosine + L-methionine + 2 oxidized [2Fe-2S]-[ferredoxin] + S-adenosyl-L-homocysteine. It carries out the reaction adenosine(37) in tRNA + 2 reduced [2Fe-2S]-[ferredoxin] + 2 S-adenosyl-L-methionine = 2-methyladenosine(37) in tRNA + 5'-deoxyadenosine + L-methionine + 2 oxidized [2Fe-2S]-[ferredoxin] + S-adenosyl-L-homocysteine. Specifically methylates position 2 of adenine 2503 in 23S rRNA and position 2 of adenine 37 in tRNAs. m2A2503 modification seems to play a crucial role in the proofreading step occurring at the peptidyl transferase center and thus would serve to optimize ribosomal fidelity. This Actinobacillus pleuropneumoniae serotype 3 (strain JL03) protein is Dual-specificity RNA methyltransferase RlmN.